The sequence spans 70 residues: Fumarase D (70 aa).

This sequence belongs to the FumD family.

The catalysed reaction is (S)-malate = fumarate + H2O. Its function is as follows. In vitro catalyzes the addition of water to fumarate, forming malate. Cannot catalyze the reverse reaction. Cannot use the cis-isomer maleate as substrate. This chain is Fumarase D, found in Salmonella typhi.